A 205-amino-acid chain; its full sequence is Small ribosomal subunit protein uS4 (205 aa).

Residues 18-46 (NIWGRPKSPVNRREYGPGQHGQRRKGKLS) form a disordered region. Residues 94–154 (RRLDAVVYRA…EASKQLAHVL (61 aa)) enclose the S4 RNA-binding domain.

It belongs to the universal ribosomal protein uS4 family. Part of the 30S ribosomal subunit. Contacts protein S5. The interaction surface between S4 and S5 is involved in control of translational fidelity.

In terms of biological role, one of the primary rRNA binding proteins, it binds directly to 16S rRNA where it nucleates assembly of the body of the 30S subunit. With S5 and S12 plays an important role in translational accuracy. The protein is Small ribosomal subunit protein uS4 of Bradyrhizobium diazoefficiens (strain JCM 10833 / BCRC 13528 / IAM 13628 / NBRC 14792 / USDA 110).